Consider the following 255-residue polypeptide: Phosphatidylglycerol--prolipoprotein diacylglyceryl transferase (255 aa).

A run of 3 helical transmembrane segments spans residues 15–35 (WYGI…NLNC), 46–66 (IDVF…YYVV), and 84–104 (LGGL…YIVS). An a 1,2-diacyl-sn-glycero-3-phospho-(1'-sn-glycerol)-binding site is contributed by arginine 130. The next 3 membrane-spanning stretches (helical) occupy residues 169–189 (PTFL…VYIF), 196–216 (GTVI…IEGL), and 228–248 (VAQL…VYLK).

It belongs to the Lgt family.

The protein resides in the cell membrane. It carries out the reaction L-cysteinyl-[prolipoprotein] + a 1,2-diacyl-sn-glycero-3-phospho-(1'-sn-glycerol) = an S-1,2-diacyl-sn-glyceryl-L-cysteinyl-[prolipoprotein] + sn-glycerol 1-phosphate + H(+). It participates in protein modification; lipoprotein biosynthesis (diacylglyceryl transfer). In terms of biological role, catalyzes the transfer of the diacylglyceryl group from phosphatidylglycerol to the sulfhydryl group of the N-terminal cysteine of a prolipoprotein, the first step in the formation of mature lipoproteins. This is Phosphatidylglycerol--prolipoprotein diacylglyceryl transferase from Clostridium kluyveri (strain NBRC 12016).